Here is a 156-residue protein sequence, read N- to C-terminus: Small ribosomal subunit protein uS7 (156 aa).

This sequence belongs to the universal ribosomal protein uS7 family. Part of the 30S ribosomal subunit. Contacts proteins S9 and S11.

One of the primary rRNA binding proteins, it binds directly to 16S rRNA where it nucleates assembly of the head domain of the 30S subunit. Is located at the subunit interface close to the decoding center, probably blocks exit of the E-site tRNA. The sequence is that of Small ribosomal subunit protein uS7 from Kocuria rhizophila (strain ATCC 9341 / DSM 348 / NBRC 103217 / DC2201).